The chain runs to 1514 residues: Polycomb group protein ASXL1 (1514 aa).

Positions 11–86 (RTWAEAARLV…RISLFTLKKD (76 aa)) constitute an HTH HARE-type domain. Disordered regions lie at residues 95-170 (ATVD…VMLP) and 183-249 (HVEP…RGEE). A compositionally biased stretch (acidic residues) spans 98–107 (DGDEPEDSAD). Over residues 111–145 (CGSNEASTVSGENDVSLDETSSNASCSTESQSRPL) the composition is skewed to polar residues. Positions 199–209 (SGSPSSSSSGS) are enriched in low complexity. Residues 243 to 246 (KRNR) are interaction with nucleosomal DNA forming a DNA clamp with BAP1. One can recognise a DEUBAD domain in the interval 255–364 (PGSILVNTNL…FEDYYGQKLG (110 aa)). Residues 284-288 (LLLLL) carry the LXXLL motif 1 motif. Residues 300–655 (LLRLSGSALN…GGGSGAIDEG (356 aa)) form an interaction with NCOA1 region. Residues 310–315 (NEFFTH) carry the NEF motif motif. An interaction with nucleosomal DNA region spans residues 336-346 (RLRQEMEKEKK). 5 disordered regions span residues 378–543 (EEAK…EDRQ), 635–823 (TTAI…FDNM), 895–914 (SDPESRENIPCPEPQDEKEW), 926–952 (SVPQPESCISHWTPPPAAVGSTGSDSE), and 964–995 (ISEAPSPHSESTDTASDSEGHLSEDSSEVDAS). The Nuclear localization signal signature appears at 408-415 (FKKRSRPD). Residues 458 to 473 (VNSTPGPDVSSATSGQ) are compositionally biased toward polar residues. 2 positions are modified to phosphoserine: serine 498 and serine 500. 2 stretches are compositionally biased toward basic and acidic residues: residues 514–525 (QETKDQKRKSFE) and 533–543 (PEKKPRLEDRQ). Residues 638-654 (IGGGGGPGGGGSGAIDE) show a composition bias toward gly residues. A compositionally biased stretch (polar residues) spans 678-692 (PSTSGESASDLQRTQ). Basic and acidic residues-rich tracts occupy residues 713-728 (ARREDSASLRKEESCL) and 779-793 (LLDDRTECESSREDQ). Positions 808-812 (LGDLL) match the LXXLL motif 2 motif. Residues 971-980 (HSESTDTASD) show a composition bias toward polar residues. The interval 1082 to 1087 (LVMHLL) is required for interaction with RARA. Disordered regions lie at residues 1095-1131 (KVLPPGHRSSRLESSQLPLREQSQDRGTLQGTGENNR), 1213-1234 (EQKEGHSLSQGSDPGAAPGQCL), and 1256-1338 (SEQT…VSAD). A compositionally biased stretch (polar residues) spans 1119 to 1129 (DRGTLQGTGEN). Composition is skewed to polar residues over residues 1256–1269 (SEQTDGTLSDQNNA) and 1313–1324 (SKNSVSGGVQTT). Residues 1476–1513 (SLQCACSLKAMIMCQGCGAFCHDDCIGPSKLCVLCLVV) form a PHD-type; atypical zinc finger.

It belongs to the Asx family. As to quaternary structure, core component of the polycomb repressive deubiquitinase (PR-DUB) complex, at least composed of BAP1, one of ASXL1, ASXL2 or (probably) ASXL3, and one of MBD5 or MBD6. Distinct combinations of ASXL and MBD proteins may preferentially bind specific histone modification marks. The PR-DUB core associates with a number of accessory proteins, including FOXK1, FOXK2, KDM1B, HCFC1 and OGT; KDM1B specifically associates with ASXL2 PR-DUB complexes. Interacts (via DEUBAD domain) with BAP1 (via ULD domain); the interaction is direct and forms a ubiquitin binding cleft. The interaction with BAP1 is important for maintaining BAP1 stability. Together with BAP1, associates (via DEUBAD domain) with nucleosomes; interacts with nucleosomal DNA and stabilizes the orientation of the nucleosome to line up the PR-DUB complex active site with its H2AK118ub1 substrate. Interacts (via PHD domain) with MBD5 and MBD6 (via MBD domain); the interaction is probably direct and mediates association of MBD proteins with the PR-DUB core. Interacts with RARA, RXRA. Interacts with NCOA1. Interacts with PPARA and PPARG. Post-translationally, ubiquitinated by TRIP12, leading to its subsequent degradation following binding of N(6)-methyladenine methylated DNA (6mA).

It localises to the nucleus. In terms of biological role, probable Polycomb group (PcG) protein involved in transcriptional regulation mediated by ligand-bound nuclear hormone receptors, such as retinoic acid receptors (RARs) and peroxisome proliferator-activated receptor gamma (PPARG). Acts as a coactivator of RARA and RXRA through association with NCOA1. Acts as a corepressor for PPARG and suppresses its adipocyte differentiation-inducing activity. Non-catalytic component of the PR-DUB complex, a complex that specifically mediates deubiquitination of histone H2A monoubiquitinated at 'Lys-119' (H2AK119ub1). Acts as a sensor of N(6)-methyladenine methylation on DNA (6mA): recognizes and binds 6mA DNA, leading to its ubiquitination and degradation by TRIP12, thereby inactivating the PR-DUB complex and regulating Polycomb silencing. The PR-DUB complex is an epigenetic regulator of gene expression and acts as a transcriptional coactivator, affecting genes involved in development, cell communication, signaling, cell proliferation and cell viability. ASXL1, ASXL2 and ASXL3 function redundantly in the PR-DUB complex. The ASXL proteins are essential for chromatin recruitment and transcriptional activation of associated genes. ASXL1 and ASXL2 are important for BAP1 protein stability. Together with BAP1, negatively regulates epithelial-mesenchymal transition (EMT) of trophoblast stem cells during placental development by regulating genes involved in epithelial cell integrity, cell adhesion and cytoskeletal organization. The protein is Polycomb group protein ASXL1 (Asxl1) of Mus musculus (Mouse).